The following is a 163-amino-acid chain: 18 kDa protein (163 aa).

In Mus musculus (Mouse), this protein is 18 kDa protein.